The primary structure comprises 432 residues: Trigger factor (432 aa).

A PPIase FKBP-type domain is found at 161–246 (EDRVTIDFTG…LKKVEERELP (86 aa)).

This sequence belongs to the FKBP-type PPIase family. Tig subfamily.

It localises to the cytoplasm. The catalysed reaction is [protein]-peptidylproline (omega=180) = [protein]-peptidylproline (omega=0). In terms of biological role, involved in protein export. Acts as a chaperone by maintaining the newly synthesized protein in an open conformation. Functions as a peptidyl-prolyl cis-trans isomerase. This chain is Trigger factor, found in Citrobacter koseri (strain ATCC BAA-895 / CDC 4225-83 / SGSC4696).